A 1765-amino-acid chain; its full sequence is MRRSKADVERYVASVLGLTPSPRQKSMKGFYFAKLYYEAKEYDLAKKYICTYINVQERDPKAHRFLGLLYELEENTEKAVECYRRSVELNPTQKDLVLKIAELLCKNDVTDGRAKYWVERAAKLFPGSPAIYKLKEQLLDCEGEDGWNKLFDLIQSELYVRPDDVHVNIRLVELYRSTKRLKDAVAHCHEAERNIALRSSLEWNSCVVQTLKEYLESLQCLESDKSDWQATNTDLLLAYANLMLLTLSTRDVQENRELLESFDSALQSAKSSLGGNDELSATFLEMKGHFYMYAGSLLLKMGQHGNNVQWRALSELAALCYLIAFQVPRPKIKLREGKAGQNLLEMMACDRLSQSGHMLLSLSRGKQDFLKEVVETFANKIGQSALYDALFSSQSPKDTSFLGSDDIGKIDVQEPELEDLARYDVGAIRAHNGSLQHLTWLGLQWNSLPALPGIRKWLKQLFHRLPHETSRLETNAPESICILDLEVFLLGVVYTSHLQLKEKCNSHHSSYQPLCLPFPVCKQLCTERQKSWWDAVCTLIHRKAVPGNLAKLRLLVQHEINTLRAQEKHGLQPALLVHWAKYLQKTGSGLNSFYGQLEYIGRSVHYWKKVLPLLKIIKKNSIPEPIDPLFKHFHSVDIQASEIVEYEEDAHITFAMLDAVNGNIEDAVTAFESIKSVVSYWNLALIFHRKAEDIENDALSPEEQEECRNYLTKTRDYLIKIIDDGDSNLSVVKKLPVPLESVKQMLNSVMQELEDYSEGGPLYKNGSLRNADSEIKHSTPSPTKYSLSPSKSYKYSPETPPRWTEDRNSLLNMICQQVEAIKKEMQELKLNSSKSASRHRWPTENYGPDSVPDGYQGSQTFHGAPLTVATTGPSVYYSQSPAYNSQYLLRPAANVTPTKGSSNTEFKSTKEGFSIPVSADGFKFGISEPGNQEKKREKPLENDTGFQAQDISGRKKGRGVIFGQTSSTFTFADVAKSTSGEGFQFGKKDLNFKGFSGAGEKLFSSRYGKMANKANTSGDFEKDDDAYKTEDSDDIHFEPVVQMPEKVELVTGEEGEKVLYSQGVKLFRFDAEVRQWKERGLGNLKILKNEVNGKLRMLMRREQVLKVCANHWITTTMNLKPLSGSDRAWMWSASDFSDGDAKLERLAAKFKTPELAEEFKQKFEECQRLLLDIPLQTPHKLVDTGRAAKLIQRAEEMKSGLKDFKTFLTNDQTKVTEEENKGSGTGAAGASDTTIKPNAENTGPTLEWDNYDLREDALDDSVSSSSVHASPLASSPVRKNLFRFDESTTGSNFSFKSALSLSKSPAKLNQSGTSVGTDEESVVTQEEERDGQYFEPVVPLPDLVEVSSGEENEQVVFSHRAEIYRYDKDVGQWKERGIGDIKILQNYDNKQVRIVMRRDQVLKLCANHRITPDMSLQNMKGTERVWVWTACDFADGERKVEHLAVRFKLQDVADSFKKIFDEAKTAQEKDSLITPHVSRSSTPRESPCGKIAVAILEETTRERTDVIQGDDVADAASEVEVSSTSETTTKAVVSPPKFVFVSESVKRIFSSEKSKPFVFGNSSATGSLFGFSFNAPLKSNNSETSSVAQSGSESKVEPKKCELSKNSDIEQSSDSKVKNLSASFPTEESSINYTFKTPEKEPPLWHAEFTKEELVQKLRSTTKSADHLNGLLREIEATNAVLMEQIKLLKSEIRRLERNQEREKSAANLEYLKNVLLQFIFLKPGSERERLLPVINTMLQLSPEEKGKLAAVAQDEEENASRSSG.

T19 carries the phosphothreonine modification. A Phosphoserine modification is found at S21. TPR repeat units follow at residues 26-59 (SMKG…QERD), 60-93 (PKAH…NPTQ), and 648-681 (EDAH…VSYW). 2 disordered regions span residues 760–804 (GPLY…PRWT) and 924–945 (FGIS…NDTG). The span at 778 to 797 (STPSPTKYSLSPSKSYKYSP) shows a compositional bias: low complexity. Positions 931–941 (NQEKKREKPLE) are enriched in basic and acidic residues. The RanBD1 1 domain occupies 1036 to 1172 (HFEPVVQMPE…FEECQRLLLD (137 aa)). Disordered stretches follow at residues 1214 to 1247 (KVTE…PTLE) and 1306 to 1330 (AKLN…EERD). The span at 1235–1244 (IKPNAENTGP) shows a compositional bias: polar residues. The span at 1317–1329 (TDEESVVTQEEER) shows a compositional bias: acidic residues. The 137-residue stretch at 1333 to 1469 (YFEPVVPLPD…FDEAKTAQEK (137 aa)) folds into the RanBD1 2 domain. Positions 1580–1593 (NNSETSSVAQSGSE) are enriched in polar residues. The segment at 1580 to 1621 (NNSETSSVAQSGSESKVEPKKCELSKNSDIEQSSDSKVKNLS) is disordered. Basic and acidic residues predominate over residues 1594–1617 (SKVEPKKCELSKNSDIEQSSDSKV). The GRIP domain maps to 1702–1752 (REKSAANLEYLKNVLLQFIFLKPGSERERLLPVINTMLQLSPEEKGKLAAV).

In terms of tissue distribution, expressed in testis.

The protein resides in the cytoplasm. The sequence is that of RANBP2-like and GRIP domain-containing protein 5/6 (RGPD5) from Homo sapiens (Human).